Here is a 172-residue protein sequence, read N- to C-terminus: Large ribosomal subunit protein uL10 (172 aa).

The protein belongs to the universal ribosomal protein uL10 family. In terms of assembly, part of the ribosomal stalk of the 50S ribosomal subunit. The N-terminus interacts with L11 and the large rRNA to form the base of the stalk. The C-terminus forms an elongated spine to which L12 dimers bind in a sequential fashion forming a multimeric L10(L12)X complex.

Forms part of the ribosomal stalk, playing a central role in the interaction of the ribosome with GTP-bound translation factors. This chain is Large ribosomal subunit protein uL10, found in Brucella anthropi (strain ATCC 49188 / DSM 6882 / CCUG 24695 / JCM 21032 / LMG 3331 / NBRC 15819 / NCTC 12168 / Alc 37) (Ochrobactrum anthropi).